The chain runs to 421 residues: Serine hydroxymethyltransferase (421 aa).

Residues Leu123 and Gly127–Leu129 contribute to the (6S)-5,6,7,8-tetrahydrofolate site. The residue at position 232 (Lys232) is an N6-(pyridoxal phosphate)lysine.

Belongs to the SHMT family. As to quaternary structure, homodimer. Pyridoxal 5'-phosphate is required as a cofactor.

Its subcellular location is the cytoplasm. It catalyses the reaction (6R)-5,10-methylene-5,6,7,8-tetrahydrofolate + glycine + H2O = (6S)-5,6,7,8-tetrahydrofolate + L-serine. It functions in the pathway one-carbon metabolism; tetrahydrofolate interconversion. Its pathway is amino-acid biosynthesis; glycine biosynthesis; glycine from L-serine: step 1/1. In terms of biological role, catalyzes the reversible interconversion of serine and glycine with tetrahydrofolate (THF) serving as the one-carbon carrier. This reaction serves as the major source of one-carbon groups required for the biosynthesis of purines, thymidylate, methionine, and other important biomolecules. Also exhibits THF-independent aldolase activity toward beta-hydroxyamino acids, producing glycine and aldehydes, via a retro-aldol mechanism. This is Serine hydroxymethyltransferase from Ehrlichia ruminantium (strain Gardel).